Here is a 125-residue protein sequence, read N- to C-terminus: Large ribosomal subunit protein uL22 (125 aa).

It belongs to the universal ribosomal protein uL22 family. As to quaternary structure, part of the 50S ribosomal subunit.

This protein binds specifically to 23S rRNA; its binding is stimulated by other ribosomal proteins, e.g. L4, L17, and L20. It is important during the early stages of 50S assembly. It makes multiple contacts with different domains of the 23S rRNA in the assembled 50S subunit and ribosome. Functionally, the globular domain of the protein is located near the polypeptide exit tunnel on the outside of the subunit, while an extended beta-hairpin is found that lines the wall of the exit tunnel in the center of the 70S ribosome. This chain is Large ribosomal subunit protein uL22, found in Acetivibrio thermocellus (strain ATCC 27405 / DSM 1237 / JCM 9322 / NBRC 103400 / NCIMB 10682 / NRRL B-4536 / VPI 7372) (Clostridium thermocellum).